Here is a 295-residue protein sequence, read N- to C-terminus: Large ribosomal subunit protein uL18 (295 aa).

Residues 251–261 (PTPKKKTDFAG) show a composition bias toward basic and acidic residues. Residues 251 to 295 (PTPKKKTDFAGKTKRWNRKKMTFSQRRDRVKQKKASFLRAKQQEG) form a disordered region. Positions 262-271 (KTKRWNRKKM) are enriched in basic residues.

The protein belongs to the universal ribosomal protein uL18 family. In terms of assembly, component of the large ribosomal subunit (LSU).

The protein resides in the cytoplasm. Its subcellular location is the nucleus. Functionally, component of the ribosome, a large ribonucleoprotein complex responsible for the synthesis of proteins in the cell. The small ribosomal subunit (SSU) binds messenger RNAs (mRNAs) and translates the encoded message by selecting cognate aminoacyl-transfer RNA (tRNA) molecules. The large subunit (LSU) contains the ribosomal catalytic site termed the peptidyl transferase center (PTC), which catalyzes the formation of peptide bonds, thereby polymerizing the amino acids delivered by tRNAs into a polypeptide chain. The nascent polypeptides leave the ribosome through a tunnel in the LSU and interact with protein factors that function in enzymatic processing, targeting, and the membrane insertion of nascent chains at the exit of the ribosomal tunnel. The polypeptide is Large ribosomal subunit protein uL18 (RPL5) (Styela clava (Sea squirt)).